The sequence spans 508 residues: Photosystem II CP47 reaction center protein (508 aa).

The next 6 helical transmembrane spans lie at 21-36 (SVHL…WAGS), 101-115 (IILS…IWHW), 140-156 (GVHL…FGVF), 203-218 (IAAG…FHVL), 237-252 (VLSS…AFVV), and 457-472 (SFAL…HGAR).

This sequence belongs to the PsbB/PsbC family. PsbB subfamily. As to quaternary structure, PSII is composed of 1 copy each of membrane proteins PsbA, PsbB, PsbC, PsbD, PsbE, PsbF, PsbH, PsbI, PsbJ, PsbK, PsbL, PsbM, PsbT, PsbY, PsbZ, Psb30/Ycf12, at least 3 peripheral proteins of the oxygen-evolving complex and a large number of cofactors. It forms dimeric complexes. The cofactor is Binds multiple chlorophylls. PSII binds additional chlorophylls, carotenoids and specific lipids..

Its subcellular location is the plastid. The protein resides in the chloroplast thylakoid membrane. Functionally, one of the components of the core complex of photosystem II (PSII). It binds chlorophyll and helps catalyze the primary light-induced photochemical processes of PSII. PSII is a light-driven water:plastoquinone oxidoreductase, using light energy to abstract electrons from H(2)O, generating O(2) and a proton gradient subsequently used for ATP formation. The protein is Photosystem II CP47 reaction center protein of Euglena gracilis.